The chain runs to 159 residues: ATP synthase subunit b 2 (159 aa).

Residues 1–21 (MDATFWAFIALVIFVAIVVYM) traverse the membrane as a helical segment.

The protein belongs to the ATPase B chain family. In terms of assembly, F-type ATPases have 2 components, F(1) - the catalytic core - and F(0) - the membrane proton channel. F(1) has five subunits: alpha(3), beta(3), gamma(1), delta(1), epsilon(1). F(0) has three main subunits: a(1), b(2) and c(10-14). The alpha and beta chains form an alternating ring which encloses part of the gamma chain. F(1) is attached to F(0) by a central stalk formed by the gamma and epsilon chains, while a peripheral stalk is formed by the delta and b chains.

The protein resides in the cell inner membrane. Its function is as follows. F(1)F(0) ATP synthase produces ATP from ADP in the presence of a proton or sodium gradient. F-type ATPases consist of two structural domains, F(1) containing the extramembraneous catalytic core and F(0) containing the membrane proton channel, linked together by a central stalk and a peripheral stalk. During catalysis, ATP synthesis in the catalytic domain of F(1) is coupled via a rotary mechanism of the central stalk subunits to proton translocation. Functionally, component of the F(0) channel, it forms part of the peripheral stalk, linking F(1) to F(0). This is ATP synthase subunit b 2 from Brucella abortus (strain S19).